A 162-amino-acid chain; its full sequence is MHNMFPALTKTLSLQGYKIINSQTGSAAWSCGRRWFSSDKDDHDDVVTRIKIAPIKRTNEPLDKKRARLIYQSRKRGILETDLLLSGFAAKYLKKMNEEELEEYDSLLNELDWDIYYWATKNFKTSPLPDKWANSKLLKQLQEFSENKEKEILSMPDLSKYQ.

The transit peptide at 1–35 (MHNMFPALTKTLSLQGYKIINSQTGSAAWSCGRRW) directs the protein to the mitochondrion.

Belongs to the SDHAF2 family. In terms of assembly, interacts with SDH1 within the SDH catalytic dimer.

The protein localises to the mitochondrion matrix. In terms of biological role, plays an essential role in the assembly of succinate dehydrogenase (SDH), an enzyme complex (also referred to as respiratory complex II) that is a component of both the tricarboxylic acid (TCA) cycle and the mitochondrial electron transport chain, and which couples the oxidation of succinate to fumarate with the reduction of ubiquinone (coenzyme Q) to ubiquinol. Required for flavinylation (covalent attachment of FAD) of the flavoprotein subunit SDH1 of the SDH catalytic dimer. It is unclear whether it participates in the chemistry of FAD attachment (enzymatic function) or acts as a chaperone that maintains SDH1 in a conformation that is susceptible to autocatalytic FAD attachment. Does not bind FAD or FADH(2) in vitro. Involved in sporulation. Required for the full activation of the early meiotic inducer IME1. This chain is Succinate dehydrogenase assembly factor 2, mitochondrial, found in Saccharomyces cerevisiae (strain ATCC 204508 / S288c) (Baker's yeast).